We begin with the raw amino-acid sequence, 668 residues long: tRNA 5-methylaminomethyl-2-thiouridine biosynthesis bifunctional protein MnmC (668 aa).

The tract at residues 1-245 (MKHYSIQPAN…KREMLCGVME (245 aa)) is tRNA (mnm(5)s(2)U34)-methyltransferase. The segment at 270–668 (IGGGIASALL…LLKGKAVKAG (399 aa)) is FAD-dependent cmnm(5)s(2)U34 oxidoreductase.

The protein in the N-terminal section; belongs to the methyltransferase superfamily. tRNA (mnm(5)s(2)U34)-methyltransferase family. In the C-terminal section; belongs to the DAO family. It depends on FAD as a cofactor.

Its subcellular location is the cytoplasm. The catalysed reaction is 5-aminomethyl-2-thiouridine(34) in tRNA + S-adenosyl-L-methionine = 5-methylaminomethyl-2-thiouridine(34) in tRNA + S-adenosyl-L-homocysteine + H(+). Functionally, catalyzes the last two steps in the biosynthesis of 5-methylaminomethyl-2-thiouridine (mnm(5)s(2)U) at the wobble position (U34) in tRNA. Catalyzes the FAD-dependent demodification of cmnm(5)s(2)U34 to nm(5)s(2)U34, followed by the transfer of a methyl group from S-adenosyl-L-methionine to nm(5)s(2)U34, to form mnm(5)s(2)U34. The chain is tRNA 5-methylaminomethyl-2-thiouridine biosynthesis bifunctional protein MnmC from Escherichia coli O6:H1 (strain CFT073 / ATCC 700928 / UPEC).